We begin with the raw amino-acid sequence, 476 residues long: Cysteine--tRNA ligase (476 aa).

C31 contributes to the Zn(2+) binding site. Positions 33–43 (PTVYNYAHIGN) match the 'HIGH' region motif. Residues C211, H236, and E240 each coordinate Zn(2+). The short motif at 269-273 (KMSKS) is the 'KMSKS' region element. K272 contacts ATP.

This sequence belongs to the class-I aminoacyl-tRNA synthetase family. In terms of assembly, monomer. It depends on Zn(2+) as a cofactor.

The protein resides in the cytoplasm. It catalyses the reaction tRNA(Cys) + L-cysteine + ATP = L-cysteinyl-tRNA(Cys) + AMP + diphosphate. The polypeptide is Cysteine--tRNA ligase (Xanthomonas oryzae pv. oryzae (strain MAFF 311018)).